The primary structure comprises 158 residues: Cysteine-rich venom protein VAR7 (158 aa).

The N-terminal stretch at 1 to 22 is a signal peptide; the sequence is MILLKLYLTLAAILCQSRGTTS. An SCP domain is found at 41 to 158; sequence NKHNDLRRTV…MGCAINLCPN (118 aa). C77 and C156 are disulfide-bonded.

The protein belongs to the CRISP family. Contains 8 disulfide bonds. Expressed by the venom gland.

The protein resides in the secreted. Blocks ryanodine receptors, and potassium channels. This chain is Cysteine-rich venom protein VAR7, found in Varanus acanthurus (Ridge-tailed monitor).